The sequence spans 369 residues: Biglycan (369 aa).

Positions 1–16 (MCPLWLLAALLALSQA) are cleaved as a signal peptide. Residues 17 to 37 (LPFEQKAFWDFTLDDGLPMLN) constitute a propeptide that is removed on maturation. Ser-42 and Ser-48 each carry an O-linked (Xyl...) (glycosaminoglycan) serine glycan. 2 disulfides stabilise this stretch: Cys-64–Cys-70 and Cys-68–Cys-77. 12 LRR repeats span residues 83–103 (KAVP…NNDI), 104–127 (SELR…NNKI), 128–151 (SKIH…KNHL), 152–172 (VEIP…DNRI), 173–196 (RKVP…GNPL), 197–221 (ENSG…EAKL), 222–242 (TGIP…HNKI), 243–266 (QAIE…HNQI), 267–290 (RMIE…NNKL), 291–313 (SRVP…TNNI), 314–343 (TKVG…NNPV), and 344–369 (PYWE…NYKK). Asn-271 and Asn-312 each carry an N-linked (GlcNAc...) asparagine glycan. An intrachain disulfide couples Cys-322 to Cys-355.

This sequence belongs to the small leucine-rich proteoglycan (SLRP) family. SLRP class I subfamily. In terms of assembly, homodimer. Forms a ternary complex with MFAP2 and ELN. Post-translationally, the two attached glycosaminoglycan chains can be either chondroitin sulfate or dermatan sulfate. In terms of tissue distribution, found in several connective tissues, especially in articular cartilages.

It is found in the secreted. It localises to the extracellular space. Its subcellular location is the extracellular matrix. In terms of biological role, may be involved in collagen fiber assembly. In Ovis aries (Sheep), this protein is Biglycan (BGN).